Consider the following 86-residue polypeptide: Small ribosomal subunit protein bS16 (86 aa).

It belongs to the bacterial ribosomal protein bS16 family.

In Carboxydothermus hydrogenoformans (strain ATCC BAA-161 / DSM 6008 / Z-2901), this protein is Small ribosomal subunit protein bS16.